Consider the following 152-residue polypeptide: Nucleoside diphosphate kinase A (152 aa).

The ATP site is built by lysine 12, phenylalanine 60, arginine 88, and threonine 94. Residue lysine 100 forms a Glycyl lysine isopeptide (Lys-Gly) (interchain with G-Cter in ubiquitin) linkage. Residues arginine 105 and asparagine 115 each coordinate ATP. Residue histidine 118 is the Pros-phosphohistidine intermediate of the active site. Serine 120, serine 122, and serine 125 each carry phosphoserine.

It belongs to the NDK family. As to quaternary structure, hexamer of two different chains: An and B (A6, A5B, A4B2, A3B3, A2B4, AB5, B6). Interacts with PRUNE1. Component of the SET complex, composed of at least ANP32A, APEX1, HMGB2, NME1, SET and TREX1. Within this complex, interacts directly with SET. Also interacts with TREX1, but only following translocation to the nucleus. Requires Mg(2+) as cofactor.

It localises to the cytoplasm. It is found in the nucleus. It carries out the reaction a 2'-deoxyribonucleoside 5'-diphosphate + ATP = a 2'-deoxyribonucleoside 5'-triphosphate + ADP. It catalyses the reaction a ribonucleoside 5'-diphosphate + ATP = a ribonucleoside 5'-triphosphate + ADP. Autophosphorylation at His-118 increases serine/threonine protein kinase activity of the enzyme. Interaction with the SET complex inhibits exonuclease activity. Its function is as follows. Major role in the synthesis of nucleoside triphosphates other than ATP. The ATP gamma phosphate is transferred to the NDP beta phosphate via a ping-pong mechanism, using a phosphorylated active-site intermediate. Possesses nucleoside-diphosphate kinase, serine/threonine-specific protein kinase, geranyl and farnesyl pyrophosphate kinase, histidine protein kinase and 3'-5' exonuclease activities. Involved in cell proliferation, differentiation and development, signal transduction, G protein-coupled receptor endocytosis, and gene expression. Required for neural development including neural patterning and cell fate determination. During GZMA-mediated cell death, works in concert with TREX1. NME1 nicks one strand of DNA and TREX1 removes bases from the free 3' end to enhance DNA damage and prevent DNA end reannealing and rapid repair. The chain is Nucleoside diphosphate kinase A (Nme1) from Rattus norvegicus (Rat).